A 216-amino-acid chain; its full sequence is Thiamine-phosphate synthase (216 aa).

Residues 41–45 (QYREK) and N73 each bind 4-amino-2-methyl-5-(diphosphooxymethyl)pyrimidine. 2 residues coordinate Mg(2+): D74 and D93. Residue S111 coordinates 4-amino-2-methyl-5-(diphosphooxymethyl)pyrimidine. 137–139 (TTT) contacts 2-[(2R,5Z)-2-carboxy-4-methylthiazol-5(2H)-ylidene]ethyl phosphate. Residue K140 participates in 4-amino-2-methyl-5-(diphosphooxymethyl)pyrimidine binding. 2-[(2R,5Z)-2-carboxy-4-methylthiazol-5(2H)-ylidene]ethyl phosphate is bound by residues G168 and 188–189 (VS).

It belongs to the thiamine-phosphate synthase family. It depends on Mg(2+) as a cofactor.

It carries out the reaction 2-[(2R,5Z)-2-carboxy-4-methylthiazol-5(2H)-ylidene]ethyl phosphate + 4-amino-2-methyl-5-(diphosphooxymethyl)pyrimidine + 2 H(+) = thiamine phosphate + CO2 + diphosphate. The catalysed reaction is 2-(2-carboxy-4-methylthiazol-5-yl)ethyl phosphate + 4-amino-2-methyl-5-(diphosphooxymethyl)pyrimidine + 2 H(+) = thiamine phosphate + CO2 + diphosphate. The enzyme catalyses 4-methyl-5-(2-phosphooxyethyl)-thiazole + 4-amino-2-methyl-5-(diphosphooxymethyl)pyrimidine + H(+) = thiamine phosphate + diphosphate. It participates in cofactor biosynthesis; thiamine diphosphate biosynthesis; thiamine phosphate from 4-amino-2-methyl-5-diphosphomethylpyrimidine and 4-methyl-5-(2-phosphoethyl)-thiazole: step 1/1. Its function is as follows. Condenses 4-methyl-5-(beta-hydroxyethyl)thiazole monophosphate (THZ-P) and 2-methyl-4-amino-5-hydroxymethyl pyrimidine pyrophosphate (HMP-PP) to form thiamine monophosphate (TMP). The protein is Thiamine-phosphate synthase of Chloroflexus aurantiacus (strain ATCC 29366 / DSM 635 / J-10-fl).